Here is a 360-residue protein sequence, read N- to C-terminus: MALSRVCWARSAVWGSAVTPGHFVTRRLQLGRSGLAWGAPRSSKLHLSPKADVKNLMSYVVTKTKAINGKYHRFLGRHFPRFYVLYTIFMKGLQMLWADAKKARRIKTNMWKHNIKFHQLPYREMEHLRQFRQDVTKCLFLGIISIPPFANYLVFLLMYLFPRQLLIRHFWTPKQQTDFLDIYHAFRKQSHPEIISYLEKVIPLISDAGLRWRLTDLCTKIQRGTHPAIHDILALRECFSNHPLGMNQLQALHVKALSRAMLLTSYLPPPLLRHRLKTHTTVIHQLDKALAKLGIGQLTAQEVKSACYLRGLNSTHIGEDRCRTWLGEWLQISCSLKEAELSLLLHNVVLLSTNYLGTRR.

The segment at 1–110 (MALSRVCWAR…KKARRIKTNM (110 aa)) is required and sufficient for mitochondrial import. Residues 1-137 (MALSRVCWAR…LRQFRQDVTK (137 aa)) are Cytoplasmic-facing. The helical transmembrane segment at 138 to 158 (CLFLGIISIPPFANYLVFLLM) threads the bilayer. Over 159-360 (YLFPRQLLIR…LSTNYLGTRR (202 aa)) the chain is Mitochondrial intermembrane. The region spanning 186-360 (FRKQSHPEII…LSTNYLGTRR (175 aa)) is the Letm1 RBD domain.

In terms of assembly, interacts with BRI3BP. Interacts (via C-terminal) with SMARCA4; the interaction regulates transcriptional expression of thermogenic genes in brown adipose tissue. In terms of tissue distribution, kidney, liver, skeletal muscle, heart and brain. Overexpressed in various tumors including leukemia, lymphoma, and carcinomas of the breast, kidney, ovary, stomach, colon and uterine cervix.

The protein localises to the mitochondrion outer membrane. Its subcellular location is the nucleus. The protein resides in the mitochondrion inner membrane. Plays an essential role for mitochondrial structure and function, as well as thermogenesis of brown adipocytes. In brown adipose tissue also localizes in the nucleus where it interacts with the chromatin remodeler SMARCA4 to regulate thermogenic genes expression, such as UCP1. May regulate phagocytosis and inflammatory responses to lipopolysaccharide in macrophages. Involved in tumorigenesis and may function as a negative regulator of the p53/TP53. The chain is LETM1 domain-containing protein 1 from Homo sapiens (Human).